The sequence spans 106 residues: Trp operon repressor homolog (106 aa).

The DNA-binding element occupies 59–82 (QREIQQILNTSAATITRGSNMIKI).

It belongs to the TrpR family. In terms of assembly, homodimer.

The protein localises to the cytoplasm. Functionally, this protein is an aporepressor. When complexed with L-tryptophan it binds the operator region of the trp operon and prevents the initiation of transcription. The chain is Trp operon repressor homolog from Histophilus somni (strain 2336) (Haemophilus somnus).